Reading from the N-terminus, the 197-residue chain is MIGKLKNLFKLGKGKKEEKAKKSLEGKGLIIFENTKDAMRAESILKDKYKIKVVAPPPEIREGCDLAIEYELIDEFGIKRELESNDIKPLKFISLNDYSLKPLELIKVKEVDGFILVRCGNMKITIDKEGNIVNISGGGCPDVPYLALKLKGRNIKDIKEEETPKNLGFTLCAYILNKGSSQRGHSWTIIDFEVLSI.

This is an uncharacterized protein from Methanocaldococcus jannaschii (strain ATCC 43067 / DSM 2661 / JAL-1 / JCM 10045 / NBRC 100440) (Methanococcus jannaschii).